A 97-amino-acid polypeptide reads, in one-letter code: Large ribosomal subunit protein uL23 (97 aa).

Belongs to the universal ribosomal protein uL23 family. In terms of assembly, part of the 50S ribosomal subunit. Contacts protein L29, and trigger factor when it is bound to the ribosome.

In terms of biological role, one of the early assembly proteins it binds 23S rRNA. One of the proteins that surrounds the polypeptide exit tunnel on the outside of the ribosome. Forms the main docking site for trigger factor binding to the ribosome. The protein is Large ribosomal subunit protein uL23 of Methylococcus capsulatus (strain ATCC 33009 / NCIMB 11132 / Bath).